An 85-amino-acid polypeptide reads, in one-letter code: MNSLVMISLALLVMTGVESVRDGYIADDKNCAYFCGRNAYCDEECKKKGAESGYCQWAGQYGNACWCYKLPDKVPIKVSGKCNGR.

Positions Met1 to Ser19 are cleaved as a signal peptide. The region spanning Arg21 to Asn83 is the LCN-type CS-alpha/beta domain. The tract at residues Asp27 to Cys31 is specificity module, loop 1. Cystine bridges form between Cys31-Cys82, Cys35-Cys55, Cys41-Cys65, and Cys45-Cys67. Specificity module, loop stretches follow at residues Ala58 to Gly62 and Pro75 to Asn83. Asn83 bears the Asparagine amide mark.

The protein belongs to the long (4 C-C) scorpion toxin superfamily. Sodium channel inhibitor family. Alpha subfamily. Post-translationally, C-terminal amidation does not appear to play an important role in activity, since the non-amidated recombinant toxin and the native toxin (which is amidated) show similar activities on all sodium channels tested. In terms of tissue distribution, expressed by the venom gland.

It localises to the secreted. Alpha toxins bind voltage-independently at site-3 of sodium channels (Nav) and inhibit the inactivation of the activated channels, thereby blocking neuronal transmission. This toxin inhibits inactivation of Nav1.6/SCN8A (EC(50)=3.1 uM) and drosophila DmNav1 (EC(50)=1.17 uM). It also shows a weak inhibition of inactivation on Nav1.2/SCN2A Nav1.3/SCN3A, and Nav1.7/SCN9A. The toxin (1 uM) does not significantly shift the midpoint of activation at the two channels, but induces a significant depolarizing shift in the V(1/2) of inactivation of the channels. The toxin has also been shown to dose-dependently stimulates intracellular signaling in DRG neurons through activation of two kinases (type II protein kinase A (PKA-II) and MAP kinases 1/3 (MAPK1/MAPK3)). Nav1.2/SCN2A is strongly suggested to be the target channel predominantly involved in this activation. In vivo, the toxin induces a dose-dependent thermal hyperalgesia lasting 30-45 minutes. The polypeptide is Sodium channel neurotoxin MeuNaTxalpha-1 (Mesobuthus eupeus (Lesser Asian scorpion)).